The chain runs to 977 residues: Vacuolar protein sorting-associated protein 54 (977 aa).

A Phosphoserine modification is found at Ser-8. Residues 239–261 (HELQDYLKKTTQAVKMLRDKIAQ) are a coiled coil. The interval 528–573 (ASAAVDTTSQRNTSPHSEPCSSDSVSEPECTTDSSSSKEQTSACAP) is disordered. Residues 532 to 570 (VDTTSQRNTSPHSEPCSSDSVSEPECTTDSSSSKEQTSA) show a composition bias toward polar residues.

This sequence belongs to the VPS54 family. In terms of assembly, component of the Golgi-associated retrograde protein (GARP) complex, also called VFT (VPS fifty-three) complex, composed of VPS51, VPS52, VPS53 and VPS54. EIPR1 interacts with GARP complex and mediates its recruitment to the trans-Golgi network. Interacts with VPS51 in an EIPR1-independent manner.

Its subcellular location is the golgi apparatus. The protein localises to the trans-Golgi network. It localises to the membrane. Acts as a component of the GARP complex that is involved in retrograde transport from early and late endosomes to the trans-Golgi network (TGN). The GARP complex is required for the maintenance of the cycling of mannose 6-phosphate receptors between the TGN and endosomes, this cycling is necessary for proper lysosomal sorting of acid hydrolases such as CTSD. Within the GARP complex, required to tether the complex to the TGN. Not involved in endocytic recycling. In Mus musculus (Mouse), this protein is Vacuolar protein sorting-associated protein 54 (Vps54).